The chain runs to 197 residues: Caspase recruitment domain-containing protein 16 (197 aa).

A CARD domain is found at 1-91 (MADKVLKEKR…YLAETLGLSA (91 aa)).

In terms of assembly, homooligomer. Interacts with CASP1, CASP4, CARD8 and RIPK2. In terms of tissue distribution, widely expressed. Expressed at higher level in placenta, spleen, lymph node and bone marrow. Weakly or not expressed in thymus.

Caspase inhibitor. Acts as a regulator of procaspase-1/CASP1 activation implicated in the regulation of the proteolytic maturation of pro-interleukin-1 beta (IL1B) and its release during inflammation. Inhibits the release of IL1B in response to LPS in monocytes. Also induces NF-kappa-B activation during the pro-inflammatory cytokine response. Also able to inhibit CASP1-mediated neuronal cell death, TNF-alpha, hypoxia-, UV-, and staurosporine-mediated cell death but not ER stress-mediated cell death. Acts by preventing activation of caspases CASP1 and CASP4, possibly by preventing the interaction between CASP1 and RIPK2. This is Caspase recruitment domain-containing protein 16 (CARD16) from Homo sapiens (Human).